We begin with the raw amino-acid sequence, 425 residues long: Serine--tRNA ligase (425 aa).

230 to 232 is a binding site for L-serine; that stretch reads TAE. 261–263 provides a ligand contact to ATP; it reads RSE. Residue Glu-284 coordinates L-serine. 348-351 contributes to the ATP binding site; sequence EISS. Ser-384 provides a ligand contact to L-serine.

The protein belongs to the class-II aminoacyl-tRNA synthetase family. Type-1 seryl-tRNA synthetase subfamily. In terms of assembly, homodimer. The tRNA molecule binds across the dimer.

It localises to the cytoplasm. The catalysed reaction is tRNA(Ser) + L-serine + ATP = L-seryl-tRNA(Ser) + AMP + diphosphate + H(+). The enzyme catalyses tRNA(Sec) + L-serine + ATP = L-seryl-tRNA(Sec) + AMP + diphosphate + H(+). The protein operates within aminoacyl-tRNA biosynthesis; selenocysteinyl-tRNA(Sec) biosynthesis; L-seryl-tRNA(Sec) from L-serine and tRNA(Sec): step 1/1. Catalyzes the attachment of serine to tRNA(Ser). Is also able to aminoacylate tRNA(Sec) with serine, to form the misacylated tRNA L-seryl-tRNA(Sec), which will be further converted into selenocysteinyl-tRNA(Sec). In Streptococcus sanguinis (strain SK36), this protein is Serine--tRNA ligase.